The primary structure comprises 121 residues: UPF0045 protein sll0230 (121 aa).

It belongs to the UPF0045 family.

The protein is UPF0045 protein sll0230 of Synechocystis sp. (strain ATCC 27184 / PCC 6803 / Kazusa).